Reading from the N-terminus, the 249-residue chain is Proteasome subunit alpha 2 (249 aa).

M1 carries the post-translational modification N-acetylmethionine.

Belongs to the peptidase T1A family. In terms of assembly, the 20S proteasome core is composed of 14 alpha and 14 beta subunits that assemble into four stacked heptameric rings, resulting in a barrel-shaped structure. The two inner rings, each composed of seven catalytic beta subunits, are sandwiched by two outer rings, each composed of seven alpha subunits. H.volcanii produces at least 2 types of 20S proteasomes: an alpha1-beta proteasome and a proteasome containing all three subunits (alpha1, alpha2, and beta) that appears to be asymmetrical with homo-oligomeric alpha1 and alpha2 rings positioned on separate ends. The catalytic chamber with the active sites is on the inside of the barrel. Has probably a gated structure, the ends of the cylinder being occluded by the N-termini of the alpha-subunits. Is likely capped at one or both ends by the proteasome regulatory ATPase, PAN.

The protein localises to the cytoplasm. The formation of the proteasomal ATPase PAN-20S proteasome complex, via the docking of the C-termini of PAN into the intersubunit pockets in the alpha-rings, triggers opening of the gate for substrate entry. Interconversion between the open-gate and close-gate conformations leads to a dynamic regulation of the 20S proteasome proteolysis activity. In terms of biological role, component of the proteasome core, a large protease complex with broad specificity involved in protein degradation. The H.volcanii alpha1-beta-alpha2 proteasome is able to cleave oligopeptides after Tyr and thus displays chymotrypsin-like activity. The sequence is that of Proteasome subunit alpha 2 from Haloferax volcanii (strain ATCC 29605 / DSM 3757 / JCM 8879 / NBRC 14742 / NCIMB 2012 / VKM B-1768 / DS2) (Halobacterium volcanii).